Here is a 406-residue protein sequence, read N- to C-terminus: Probable endo-xylogalacturonan hydrolase A (406 aa).

An N-terminal signal peptide occupies residues 1 to 18; the sequence is MLYYRNLALLSLLSLSSA. PbH1 repeat units follow at residues 183–213, 214–235, 237–257, and 299–320; these read AKDVTFTNLRMDATSRSDNPPKNTDGFDIGS, STHVTISSVSVSNDDDCVALKP, CNYVTVENVTCTGSHGISVGS, and VKNVTFSDFNVRGCDYAFQIQS. Aspartate 228 acts as the Proton donor in catalysis. Asparagine 244 carries N-linked (GlcNAc...) asparagine glycosylation. Histidine 251 is an active-site residue. The N-linked (GlcNAc...) asparagine glycan is linked to asparagine 301.

Belongs to the glycosyl hydrolase 28 family.

The protein localises to the secreted. In terms of biological role, pectinolytic enzyme involved in the degradation of xylogalacturonan (xga), a galacturonan backbone heavily substituted with xylose, and which is one important component of the hairy regions of pectin. Activity requires a galacturonic acid backbone substituted with xylose. This is Probable endo-xylogalacturonan hydrolase A (xghA) from Neosartorya fischeri (strain ATCC 1020 / DSM 3700 / CBS 544.65 / FGSC A1164 / JCM 1740 / NRRL 181 / WB 181) (Aspergillus fischerianus).